The following is a 350-amino-acid chain: Homoserine O-succinyltransferase (350 aa).

Cys-146 functions as the Acyl-thioester intermediate in the catalytic mechanism. Residues Lys-167 and Ser-196 each coordinate substrate. Residue His-239 is the Proton acceptor of the active site. Glu-241 is a catalytic residue. Arg-253 lines the substrate pocket.

The protein belongs to the MetA family.

The protein localises to the cytoplasm. It catalyses the reaction L-homoserine + succinyl-CoA = O-succinyl-L-homoserine + CoA. Its pathway is amino-acid biosynthesis; L-methionine biosynthesis via de novo pathway; O-succinyl-L-homoserine from L-homoserine: step 1/1. Functionally, transfers a succinyl group from succinyl-CoA to L-homoserine, forming succinyl-L-homoserine. The protein is Homoserine O-succinyltransferase of Cardiobacterium hominis (strain ATCC 15826 / DSM 8339 / NCTC 10426 / 6573).